The chain runs to 327 residues: Urokinase plasminogen activator surface receptor (327 aa).

The signal sequence occupies residues 1–23 (MGLPRRLLLLLLLATTCVPASQG). 3 consecutive UPAR/Ly6 domains span residues 24 to 117 (LQCM…GRYL), 117 to 212 (LECA…PPNG), and 213 to 298 (FQCY…SPTG). Disulfide bonds link cysteine 26–cysteine 47, cysteine 29–cysteine 35, and cysteine 40–cysteine 68. The N-linked (GlcNAc...) asparagine glycan is linked to asparagine 32. Residue asparagine 75 is glycosylated (N-linked (GlcNAc...) asparagine). Cystine bridges form between cysteine 94–cysteine 99, cysteine 119–cysteine 146, cysteine 122–cysteine 129, cysteine 139–cysteine 168, cysteine 174–cysteine 191, cysteine 192–cysteine 197, cysteine 215–cysteine 243, cysteine 218–cysteine 226, cysteine 236–cysteine 262, cysteine 268–cysteine 287, and cysteine 288–cysteine 293. Residues asparagine 183, asparagine 193, asparagine 221, asparagine 254, and asparagine 282 are each glycosylated (N-linked (GlcNAc...) asparagine). Glycine 298 carries the GPI-anchor amidated glycine lipid modification. A propeptide spans 299-327 (GAPRPGPAQLSLIASLLLTLGLWGVLLWT) (removed in mature form).

As to quaternary structure, monomer. Interacts (via the UPAR/Ly6 domains) with SRPX2. Interacts with MRC2. Interacts with SORL1 (via N-terminal ectodomain); this interaction decreases PLAUR internalization. The ternary complex composed of PLAUR-PLAU-SERPINE1 also interacts with SORL1. Interacts with CD82; this interaction prevents PLAUR from binding to its high affinity ligand PLAU. In terms of tissue distribution, expressed in angiogenic endothelial cells (at protein level).

The protein localises to the cell membrane. The protein resides in the secreted. Acts as a receptor for urokinase plasminogen activator. Plays a role in localizing and promoting plasmin formation. Mediates the proteolysis-independent signal transduction activation effects of U-PA. This chain is Urokinase plasminogen activator surface receptor (Plaur), found in Mus musculus (Mouse).